The primary structure comprises 1722 residues: Leucine-rich repeat- and IQ domain-containing protein 1 (1722 aa).

Disordered regions lie at residues 23 to 47, 182 to 202, 265 to 285, and 319 to 367; these read SLEKEDIESDAKSETQSDDSDTDSV, EDKEKQTLKAQRDREEKQFQE, RTRFKDQQEKEKNSLLKQQNN, and QEWK…YEEK. Over residues 38–47 the composition is skewed to acidic residues; the sequence is QSDDSDTDSV. Basic and acidic residues predominate over residues 265 to 278; the sequence is RTRFKDQQEKEKNS. The 30-residue stretch at 283–312 folds into the IQ 1 domain; it reads QNNAAVKIQAKYKAFVAYQKYGPIIKEQIE. 10 LRR repeats span residues 819–840, 841–861, 862–883, 884–905, 970–991, 992–1013, 1014–1035, 1036–1057, 1060–1081, and 1082–1103; these read NLQFLSLRRCGLTSLHSLSNCK, KLKYIDAQENHIEAIECENLE, NLCVVLLNKNQLTSLHGLDGCT, NIQCLELSYNKITRIGYSFFLE, NLQQLILDHNQLINTKGLCDTP, TIVYLDCSHNHLTDVEGVENCG, LLQILKLQGNYLSELPSLENLV, LLRELHLDDNSISTVEAFSSYW, LLQNITISQNSLTKIVPLFHFV, and SLEKLDVSHNCLSDLKSAIKWF. The region spanning 1117–1157 is the LRRCT domain; that stretch reads NPLLQETNWRDSLLKVLPALRILNGNILNSNSESRTEEHNQ. IQ domains lie at 1335-1364 and 1395-1424; these read KIMAAVVIQSYWRGYLMRRQTHFSTRLHTA and REKAAILIQAVWKGFILRKKLTTALEAIKN. Over residues 1506–1524 the composition is skewed to polar residues; it reads SEHTQFNSRSENKTSSWTP. The segment at 1506-1534 is disordered; it reads SEHTQFNSRSENKTSSWTPESKTSRKSLL.

The polypeptide is Leucine-rich repeat- and IQ domain-containing protein 1 (LRRIQ1) (Homo sapiens (Human)).